The following is a 152-amino-acid chain: Methylglyoxal synthase (152 aa).

One can recognise an MGS-like domain in the interval 6 to 152 (RTMATAKNIA…YQHYLNGRLK (147 aa)). Residues His19, Lys23, 45 to 48 (TGTT), and 65 to 66 (SG) each bind substrate. Asp71 (proton donor/acceptor) is an active-site residue. His98 contacts substrate.

The protein belongs to the methylglyoxal synthase family.

It catalyses the reaction dihydroxyacetone phosphate = methylglyoxal + phosphate. Functionally, catalyzes the formation of methylglyoxal from dihydroxyacetone phosphate. This Photorhabdus laumondii subsp. laumondii (strain DSM 15139 / CIP 105565 / TT01) (Photorhabdus luminescens subsp. laumondii) protein is Methylglyoxal synthase.